The chain runs to 167 residues: MQGDIRRKKDLLPRYKTGSKYNSRRRGGYLTTPMKKIIVYIILLCGVYFVIKVAYSDLNKETEIKLESHSSDVSASASDHTNIAAGGAADATNNKQPQQAKVPKEKFNNEVAKQQEVKNLENDLKPQIDSEKQKQINKDKKEQKQQLQKEKQDLAKENLANNEILDN.

Over residues 1–13 the composition is skewed to basic and acidic residues; the sequence is MQGDIRRKKDLLP. Disordered stretches follow at residues 1-26 and 67-167; these read MQGDIRRKKDLLPRYKTGSKYNSRRR and ESHS…ILDN. The span at 71–80 shows a compositional bias: low complexity; that stretch reads SDVSASASDH. Over residues 102-156 the composition is skewed to basic and acidic residues; the sequence is VPKEKFNNEVAKQQEVKNLENDLKPQIDSEKQKQINKDKKEQKQQLQKEKQDLAK.

This is an uncharacterized protein from Saccharomyces cerevisiae (strain ATCC 204508 / S288c) (Baker's yeast).